The sequence spans 367 residues: Flagellar P-ring protein (367 aa).

The N-terminal stretch at 1 to 24 (MLRPIITLLCLTLMLCTAAGPAGA) is a signal peptide.

It belongs to the FlgI family. In terms of assembly, the basal body constitutes a major portion of the flagellar organelle and consists of four rings (L,P,S, and M) mounted on a central rod.

It is found in the periplasm. It localises to the bacterial flagellum basal body. Its function is as follows. Assembles around the rod to form the L-ring and probably protects the motor/basal body from shearing forces during rotation. The protein is Flagellar P-ring protein of Syntrophotalea carbinolica (strain DSM 2380 / NBRC 103641 / GraBd1) (Pelobacter carbinolicus).